Consider the following 334-residue polypeptide: Formylmethanofuran--tetrahydromethanopterin formyltransferase (334 aa).

The protein belongs to the FTR family. As to quaternary structure, homotetramer.

The protein localises to the cytoplasm. The enzyme catalyses N-formylmethanofuran + 5,6,7,8-tetrahydromethanopterin + H(+) = N(5)-formyl-5,6,7,8-tetrahydromethanopterin + methanofuran. Its pathway is one-carbon metabolism; formaldehyde degradation; formate from formaldehyde (H(4)MPT route): step 4/5. Its function is as follows. Catalyzes the transfer of a formyl group from 5-formyl tetrahydromethanopterin (5-formyl-H(4)MPT) to methanofuran (MFR) to produce formylmethanofuran (formyl-MFR) and tetrahydromethanopterin (H(4)MPT). The polypeptide is Formylmethanofuran--tetrahydromethanopterin formyltransferase (Rhodopirellula baltica (strain DSM 10527 / NCIMB 13988 / SH1)).